A 248-amino-acid chain; its full sequence is 3-deoxy-manno-octulosonate cytidylyltransferase (248 aa).

It belongs to the KdsB family.

It localises to the cytoplasm. The enzyme catalyses 3-deoxy-alpha-D-manno-oct-2-ulosonate + CTP = CMP-3-deoxy-beta-D-manno-octulosonate + diphosphate. It functions in the pathway nucleotide-sugar biosynthesis; CMP-3-deoxy-D-manno-octulosonate biosynthesis; CMP-3-deoxy-D-manno-octulosonate from 3-deoxy-D-manno-octulosonate and CTP: step 1/1. It participates in bacterial outer membrane biogenesis; lipopolysaccharide biosynthesis. Its function is as follows. Activates KDO (a required 8-carbon sugar) for incorporation into bacterial lipopolysaccharide in Gram-negative bacteria. This Syntrophus aciditrophicus (strain SB) protein is 3-deoxy-manno-octulosonate cytidylyltransferase.